The primary structure comprises 191 residues: Recombination protein RecR (191 aa).

A C4-type zinc finger spans residues 51–66 (CQTCFHLSADPECEIC). In terms of domain architecture, Toprim spans 74–168 (GVICVVADSR…SVSRIAYGLP (95 aa)).

The protein belongs to the RecR family.

Functionally, may play a role in DNA repair. It seems to be involved in an RecBC-independent recombinational process of DNA repair. It may act with RecF and RecO. This is Recombination protein RecR from Synechococcus sp. (strain CC9605).